We begin with the raw amino-acid sequence, 182 residues long: Large ribosomal subunit protein uL5 (182 aa).

Belongs to the universal ribosomal protein uL5 family. In terms of assembly, part of the 50S ribosomal subunit; part of the 5S rRNA/L5/L18/L25 subcomplex. Contacts the 5S rRNA and the P site tRNA. Forms a bridge to the 30S subunit in the 70S ribosome.

In terms of biological role, this is one of the proteins that bind and probably mediate the attachment of the 5S RNA into the large ribosomal subunit, where it forms part of the central protuberance. In the 70S ribosome it contacts protein S13 of the 30S subunit (bridge B1b), connecting the 2 subunits; this bridge is implicated in subunit movement. Contacts the P site tRNA; the 5S rRNA and some of its associated proteins might help stabilize positioning of ribosome-bound tRNAs. In Borrelia turicatae (strain 91E135), this protein is Large ribosomal subunit protein uL5.